The sequence spans 564 residues: Proline--tRNA ligase (564 aa).

It belongs to the class-II aminoacyl-tRNA synthetase family. ProS type 1 subfamily. Homodimer.

It localises to the cytoplasm. The catalysed reaction is tRNA(Pro) + L-proline + ATP = L-prolyl-tRNA(Pro) + AMP + diphosphate. Functionally, catalyzes the attachment of proline to tRNA(Pro) in a two-step reaction: proline is first activated by ATP to form Pro-AMP and then transferred to the acceptor end of tRNA(Pro). As ProRS can inadvertently accommodate and process non-cognate amino acids such as alanine and cysteine, to avoid such errors it has two additional distinct editing activities against alanine. One activity is designated as 'pretransfer' editing and involves the tRNA(Pro)-independent hydrolysis of activated Ala-AMP. The other activity is designated 'posttransfer' editing and involves deacylation of mischarged Ala-tRNA(Pro). The misacylated Cys-tRNA(Pro) is not edited by ProRS. In Xanthomonas campestris pv. campestris (strain 8004), this protein is Proline--tRNA ligase.